A 546-amino-acid polypeptide reads, in one-letter code: Chaperonin GroEL 1 (546 aa).

Residues 30-33 (TLGP), lysine 51, 87-91 (DGTTT), glycine 415, 479-481 (NAA), and aspartate 495 each bind ATP. Residues 526–546 (KEDAPMPGGMPGGMGGMGMDM) form a disordered region. Residues 534 to 546 (GMPGGMGGMGMDM) show a composition bias toward gly residues.

The protein belongs to the chaperonin (HSP60) family. Forms a cylinder of 14 subunits composed of two heptameric rings stacked back-to-back. Interacts with the co-chaperonin GroES.

The protein resides in the cytoplasm. It carries out the reaction ATP + H2O + a folded polypeptide = ADP + phosphate + an unfolded polypeptide.. Together with its co-chaperonin GroES, plays an essential role in assisting protein folding. The GroEL-GroES system forms a nano-cage that allows encapsulation of the non-native substrate proteins and provides a physical environment optimized to promote and accelerate protein folding. This is Chaperonin GroEL 1 from Burkholderia pseudomallei (strain K96243).